A 333-amino-acid chain; its full sequence is Cytochrome f (333 aa).

A signal peptide spans 1–37 (MRNSCKKARRTRPLKATIQALLVAIATMTFFFTSDIA). Over 38–298 (LPQSAAAYPF…TEIVLQDPNR (261 aa)) the chain is Cytoplasmic. Heme is bound by residues Tyr45, Cys66, Cys69, and His70. A helical transmembrane segment spans residues 299–319 (VKWMIAFICLVMLAQLMLILK). At 320–333 (KKQVEKVQAAEMNF) the chain is on the lumenal, thylakoid side.

Belongs to the cytochrome f family. In terms of assembly, the 4 large subunits of the cytochrome b6-f complex are cytochrome b6, subunit IV (17 kDa polypeptide, PetD), cytochrome f and the Rieske protein, while the 4 small subunits are PetG, PetL, PetM and PetN. The complex functions as a dimer. It depends on heme as a cofactor.

The protein localises to the cellular thylakoid membrane. Its function is as follows. Component of the cytochrome b6-f complex, which mediates electron transfer between photosystem II (PSII) and photosystem I (PSI), cyclic electron flow around PSI, and state transitions. The chain is Cytochrome f (petA) from Mastigocladus laminosus (Fischerella sp.).